A 283-amino-acid chain; its full sequence is Foldase protein PrsA 3 (283 aa).

The first 21 residues, 1–21 (MKKKKIFIGTIISCVMLALSA), serve as a signal peptide directing secretion. Cys-22 carries N-palmitoyl cysteine lipidation. A lipid anchor (S-diacylglycerol cysteine) is attached at Cys-22. Positions 132-222 (KPEMKVSHIL…YGYHIIKVTD (91 aa)) constitute a PpiC domain.

It belongs to the PrsA family.

Its subcellular location is the cell membrane. It carries out the reaction [protein]-peptidylproline (omega=180) = [protein]-peptidylproline (omega=0). Its function is as follows. Plays a major role in protein secretion by helping the post-translocational extracellular folding of several secreted proteins. In Bacillus cereus (strain ATCC 14579 / DSM 31 / CCUG 7414 / JCM 2152 / NBRC 15305 / NCIMB 9373 / NCTC 2599 / NRRL B-3711), this protein is Foldase protein PrsA 3 (prsA3).